The sequence spans 332 residues: Methionyl-tRNA formyltransferase (332 aa).

114-117 (SLLP) contributes to the (6S)-5,6,7,8-tetrahydrofolate binding site.

This sequence belongs to the Fmt family.

It catalyses the reaction L-methionyl-tRNA(fMet) + (6R)-10-formyltetrahydrofolate = N-formyl-L-methionyl-tRNA(fMet) + (6S)-5,6,7,8-tetrahydrofolate + H(+). Its function is as follows. Attaches a formyl group to the free amino group of methionyl-tRNA(fMet). The formyl group appears to play a dual role in the initiator identity of N-formylmethionyl-tRNA by promoting its recognition by IF2 and preventing the misappropriation of this tRNA by the elongation apparatus. The protein is Methionyl-tRNA formyltransferase of Corynebacterium aurimucosum (strain ATCC 700975 / DSM 44827 / CIP 107346 / CN-1) (Corynebacterium nigricans).